Reading from the N-terminus, the 128-residue chain is Glycoprotein hormone alpha-2 (128 aa).

Positions 1-20 (MPMAPRVLLLCLLGLAVTEG) are cleaved as a signal peptide. Intrachain disulfides connect Cys-30–Cys-88, Cys-47–Cys-102, Cys-56–Cys-118, and Cys-60–Cys-120. Asn-36 and Asn-80 each carry an N-linked (GlcNAc...) asparagine glycan.

Belongs to the glycoprotein hormones subunit alpha family. In terms of assembly, heterodimer with GPHB5; this heterodimer interacts with thyroid-stimulating hormone receptor (TSHR), and hence stimulates cAMP production.

The protein localises to the secreted. In terms of biological role, functions as a heterodimeric glycoprotein hormone with GPHB5 able to bind and activate the thyroid-stimulating hormone receptor (TSHR), leading to increased cAMP production. Plays a central role in controlling thyroid cell metabolism. In Mus musculus (Mouse), this protein is Glycoprotein hormone alpha-2 (Gpha2).